Reading from the N-terminus, the 404-residue chain is Probable tRNA sulfurtransferase (404 aa).

Residues 60 to 165 form the THUMP domain; it reads HEVAESLKEI…DEAAYISYEN (106 aa). Residues 183–184, 208–209, arginine 265, glycine 287, and glutamine 296 contribute to the ATP site; these read ML and HF.

The protein belongs to the ThiI family.

Its subcellular location is the cytoplasm. The enzyme catalyses [ThiI sulfur-carrier protein]-S-sulfanyl-L-cysteine + a uridine in tRNA + 2 reduced [2Fe-2S]-[ferredoxin] + ATP + H(+) = [ThiI sulfur-carrier protein]-L-cysteine + a 4-thiouridine in tRNA + 2 oxidized [2Fe-2S]-[ferredoxin] + AMP + diphosphate. It carries out the reaction [ThiS sulfur-carrier protein]-C-terminal Gly-Gly-AMP + S-sulfanyl-L-cysteinyl-[cysteine desulfurase] + AH2 = [ThiS sulfur-carrier protein]-C-terminal-Gly-aminoethanethioate + L-cysteinyl-[cysteine desulfurase] + A + AMP + 2 H(+). Its pathway is cofactor biosynthesis; thiamine diphosphate biosynthesis. In terms of biological role, catalyzes the ATP-dependent transfer of a sulfur to tRNA to produce 4-thiouridine in position 8 of tRNAs, which functions as a near-UV photosensor. Also catalyzes the transfer of sulfur to the sulfur carrier protein ThiS, forming ThiS-thiocarboxylate. This is a step in the synthesis of thiazole, in the thiamine biosynthesis pathway. The sulfur is donated as persulfide by IscS. The sequence is that of Probable tRNA sulfurtransferase from Streptococcus agalactiae serotype Ia (strain ATCC 27591 / A909 / CDC SS700).